The primary structure comprises 260 residues: MEWWRRWYFLWGGDSVGAAILFYTRLPWPPSWPVNFDRIARWITLMGLLLSLILLALDRGLHWLGMDNLLQSAVVVSLWLALTGGLHLDGVADTADGLAVTNPSKRLAVMQDSYTGAYGVMAIAVVLLLKTFALASFSDHGLASWALIMALGWGRWGQLLAIALYPYLRENGKGAMHKRNLKLRPDLLLGTMIIVFGGVGMGYALAIEPWLILGATGSSALIAWAVGRWFAQQFKGHTGDTYGAVVEWSEVLILLGLSLV.

Helical transmembrane passes span 7-27 (WYFLWGGDSVGAAILFYTRLP), 45-65 (LMGLLLSLILLALDRGLHWLG), 117-137 (AYGVMAIAVVLLLKTFALASF), 145-165 (WALIMALGWGRWGQLLAIALY), 187-207 (LLLGTMIIVFGGVGMGYALAI), and 210-230 (WLILGATGSSALIAWAVGRWF).

The protein belongs to the CobS family. The cofactor is Mg(2+).

It is found in the cell inner membrane. The enzyme catalyses alpha-ribazole + adenosylcob(III)inamide-GDP = adenosylcob(III)alamin + GMP + H(+). It carries out the reaction alpha-ribazole 5'-phosphate + adenosylcob(III)inamide-GDP = adenosylcob(III)alamin 5'-phosphate + GMP + H(+). The protein operates within cofactor biosynthesis; adenosylcobalamin biosynthesis; adenosylcobalamin from cob(II)yrinate a,c-diamide: step 7/7. In terms of biological role, joins adenosylcobinamide-GDP and alpha-ribazole to generate adenosylcobalamin (Ado-cobalamin). Also synthesizes adenosylcobalamin 5'-phosphate from adenosylcobinamide-GDP and alpha-ribazole 5'-phosphate. The sequence is that of Adenosylcobinamide-GDP ribazoletransferase from Synechocystis sp. (strain ATCC 27184 / PCC 6803 / Kazusa).